Here is a 459-residue protein sequence, read N- to C-terminus: N-chimaerin (459 aa).

At Ala2 the chain carries N-acetylalanine. Residues 49–135 form the SH2 domain; sequence EFHGMISREA…IETKAAEYIA (87 aa). Residue Thr192 is modified to Phosphothreonine. Residues 205–255 form a Phorbol-ester/DAG-type zinc finger; the sequence is IHNFKVHTFRGPHWCEYCANFMWGLIAQGVKCADCGLNVHKQCSKMVPNDC. The region spanning 268-459 is the Rho-GAP domain; the sequence is CDLTTLVKAH…LLIKNEDILF (192 aa). Thr340 is subject to Phosphothreonine.

As to quaternary structure, interacts with EPHA4; effector of EPHA4 in axon guidance linking EPHA4 activation to RAC1 regulation. In terms of processing, phosphorylated. Phosphorylation is EPHA4 kinase activity-dependent. In neurons in brain regions that are involved in learning and memory processes.

In terms of biological role, GTPase-activating protein for p21-rac and a phorbol ester receptor. Involved in the assembly of neuronal locomotor circuits as a direct effector of EPHA4 in axon guidance. The chain is N-chimaerin (CHN1) from Homo sapiens (Human).